A 362-amino-acid chain; its full sequence is Probable dual-specificity RNA methyltransferase RlmN (362 aa).

The active-site Proton acceptor is Glu-91. The Radical SAM core domain occupies 97–329 (QHYGLSVCVT…KKNGVNCVVR (233 aa)). The cysteines at positions 104 and 340 are disulfide-linked. The [4Fe-4S] cluster site is built by Cys-111, Cys-115, and Cys-118. S-adenosyl-L-methionine is bound by residues 163–164 (GE), Ser-195, 218–220 (SLH), and Asn-296. Cys-340 acts as the S-methylcysteine intermediate in catalysis.

This sequence belongs to the radical SAM superfamily. RlmN family. Requires [4Fe-4S] cluster as cofactor.

The protein localises to the cytoplasm. The catalysed reaction is adenosine(2503) in 23S rRNA + 2 reduced [2Fe-2S]-[ferredoxin] + 2 S-adenosyl-L-methionine = 2-methyladenosine(2503) in 23S rRNA + 5'-deoxyadenosine + L-methionine + 2 oxidized [2Fe-2S]-[ferredoxin] + S-adenosyl-L-homocysteine. It catalyses the reaction adenosine(37) in tRNA + 2 reduced [2Fe-2S]-[ferredoxin] + 2 S-adenosyl-L-methionine = 2-methyladenosine(37) in tRNA + 5'-deoxyadenosine + L-methionine + 2 oxidized [2Fe-2S]-[ferredoxin] + S-adenosyl-L-homocysteine. Its function is as follows. Specifically methylates position 2 of adenine 2503 in 23S rRNA and position 2 of adenine 37 in tRNAs. The chain is Probable dual-specificity RNA methyltransferase RlmN from Streptococcus sanguinis (strain SK36).